The following is a 177-amino-acid chain: Large ribosomal subunit protein uL6 (177 aa).

Over residues 157–171 (YKGKGVRYSDENVRR) the composition is skewed to basic and acidic residues. The disordered stretch occupies residues 157 to 177 (YKGKGVRYSDENVRRKEAKKK).

Belongs to the universal ribosomal protein uL6 family. In terms of assembly, part of the 50S ribosomal subunit.

Its function is as follows. This protein binds to the 23S rRNA, and is important in its secondary structure. It is located near the subunit interface in the base of the L7/L12 stalk, and near the tRNA binding site of the peptidyltransferase center. The polypeptide is Large ribosomal subunit protein uL6 (Pseudoalteromonas translucida (strain TAC 125)).